A 569-amino-acid polypeptide reads, in one-letter code: Urease subunit alpha (569 aa).

Positions 131-569 constitute a Urease domain; the sequence is GGMDAHIHYI…LPMAQRYFLF (439 aa). 3 residues coordinate Ni(2+): His136, His138, and Lys218. Lys218 carries the N6-carboxylysine modification. His220 lines the substrate pocket. Residues His247 and His273 each coordinate Ni(2+). His321 functions as the Proton donor in the catalytic mechanism. Residue Asp361 coordinates Ni(2+).

Belongs to the metallo-dependent hydrolases superfamily. Urease alpha subunit family. In terms of assembly, heterotrimer of UreA (gamma), UreB (beta) and UreC (alpha) subunits. Three heterotrimers associate to form the active enzyme. The cofactor is Ni cation. Carboxylation allows a single lysine to coordinate two nickel ions.

It is found in the cytoplasm. It catalyses the reaction urea + 2 H2O + H(+) = hydrogencarbonate + 2 NH4(+). It participates in nitrogen metabolism; urea degradation; CO(2) and NH(3) from urea (urease route): step 1/1. In Agrobacterium fabrum (strain C58 / ATCC 33970) (Agrobacterium tumefaciens (strain C58)), this protein is Urease subunit alpha.